The primary structure comprises 258 residues: 5'-nucleotidase SurE (258 aa).

Positions 8, 9, 39, and 95 each coordinate a divalent metal cation.

The protein belongs to the SurE nucleotidase family. Requires a divalent metal cation as cofactor.

The protein resides in the cytoplasm. The catalysed reaction is a ribonucleoside 5'-phosphate + H2O = a ribonucleoside + phosphate. Its function is as follows. Nucleotidase that shows phosphatase activity on nucleoside 5'-monophosphates. The sequence is that of 5'-nucleotidase SurE from Methanobrevibacter smithii (strain ATCC 35061 / DSM 861 / OCM 144 / PS).